A 261-amino-acid polypeptide reads, in one-letter code: GTP cyclohydrolase FolE2 (261 aa).

The protein belongs to the GTP cyclohydrolase IV family.

It carries out the reaction GTP + H2O = 7,8-dihydroneopterin 3'-triphosphate + formate + H(+). It participates in cofactor biosynthesis; 7,8-dihydroneopterin triphosphate biosynthesis; 7,8-dihydroneopterin triphosphate from GTP: step 1/1. In terms of biological role, converts GTP to 7,8-dihydroneopterin triphosphate. The sequence is that of GTP cyclohydrolase FolE2 from Fervidobacterium nodosum (strain ATCC 35602 / DSM 5306 / Rt17-B1).